The chain runs to 243 residues: Secreted RxLR effector protein 28 (243 aa).

An N-terminal signal peptide occupies residues 1 to 26 (MHVSRIIAHIALATAITATTVSPTDA). The short motif at 49 to 52 (RGLR) is the RxLR element. The interval 187–243 (NVDEDKGQNFGHSVSGPPTTTLTGPHTKSGIPPFENLVAPAKGSMPNTRRNGYQFFE) is disordered. The span at 199 to 216 (SVSGPPTTTLTGPHTKSG) shows a compositional bias: low complexity.

This sequence belongs to the RxLR effector family.

It is found in the secreted. The protein localises to the host cytoplasm. Its subcellular location is the host nucleus. Functionally, effector that significantly enhances susceptibilities of grapevine and tobacco to pathogens. Acts as a broad suppressor of cell death to interrupt plant immunity. Completely inhibits cell death induced by cell death-inducing proteins, including the PAMP elicitor INF1 from P.infestans. Reduces the transcriptional levels of the defense-related genes and impairs the H(2)O(2) accumulation in N.benthamiana. The sequence is that of Secreted RxLR effector protein 28 from Plasmopara viticola (Downy mildew of grapevine).